Reading from the N-terminus, the 135-residue chain is Basic phospholipase A2 6 (135 aa).

Disulfide bonds link cysteine 28/cysteine 87, cysteine 42/cysteine 134, cysteine 44/cysteine 60, cysteine 59/cysteine 115, cysteine 66/cysteine 108, cysteine 76/cysteine 101, and cysteine 94/cysteine 106. Positions 43, 45, and 47 each coordinate Ca(2+). Residue histidine 63 is part of the active site. Residue aspartate 64 participates in Ca(2+) binding. Residue aspartate 109 is part of the active site.

Belongs to the phospholipase A2 family. Group I subfamily. D49 sub-subfamily. Ca(2+) serves as cofactor. In terms of tissue distribution, expressed by the venom gland.

Its subcellular location is the secreted. The enzyme catalyses a 1,2-diacyl-sn-glycero-3-phosphocholine + H2O = a 1-acyl-sn-glycero-3-phosphocholine + a fatty acid + H(+). Snake venom phospholipase A2 (PLA2) that inhibits neuromuscular transmission by blocking acetylcholine release from the nerve termini. PLA2 catalyzes the calcium-dependent hydrolysis of the 2-acyl groups in 3-sn-phosphoglycerides. Very weakly suppress the acetylcholine (ACh)-evoked current mediated by alpha-7-similar nAChRs in L.stagnalis neurons. This is Basic phospholipase A2 6 from Bungarus fasciatus (Banded krait).